Consider the following 649-residue polypeptide: Threonine--tRNA ligase (649 aa).

Residues 1–66 (MVQITLPDGS…DNDAQLAIVT (66 aa)) enclose the TGS domain. Residues 247-538 (DHRKIGRELD…LIENHAGAMP (292 aa)) are catalytic. 3 residues coordinate Zn(2+): Cys338, His389, and His515.

The protein belongs to the class-II aminoacyl-tRNA synthetase family. As to quaternary structure, homodimer. It depends on Zn(2+) as a cofactor.

It is found in the cytoplasm. The catalysed reaction is tRNA(Thr) + L-threonine + ATP = L-threonyl-tRNA(Thr) + AMP + diphosphate + H(+). Functionally, catalyzes the attachment of threonine to tRNA(Thr) in a two-step reaction: L-threonine is first activated by ATP to form Thr-AMP and then transferred to the acceptor end of tRNA(Thr). Also edits incorrectly charged L-seryl-tRNA(Thr). The chain is Threonine--tRNA ligase from Bordetella bronchiseptica (strain ATCC BAA-588 / NCTC 13252 / RB50) (Alcaligenes bronchisepticus).